The sequence spans 288 residues: MTIQWFPGHMAKARRQVTEKLKLIDIVYELVDARIPQSSRNPMIDEIIVNKPRIVLLNKVDKADPRVTQQWLDYYKEQGIYALAIDAQAGKGMKQIVSSSKELLQEKFDRMRAKGVKKPRAIRAMIVGIPNVGKSTLINRLASKKIAKTGDRPGVTQAQQWIKVGNELELLDTPGILWPKFEDETVGYKLATTGAIKDTILNMQDVAVYALRFLTSHYPEQLKQRYNLNEIPEDIVELFDAIGSRRGCLMGGGMVDYDKTAELVLREIRTDKIGTFTFDDPSEAEQPL.

The CP-type G domain occupies 14–179 (RRQVTEKLKL…LLDTPGILWP (166 aa)). GTP is bound by residues 58-61 (NKVD), 131-136 (NVGKST), and Gly-175.

The protein belongs to the TRAFAC class YlqF/YawG GTPase family. MTG1 subfamily. In terms of assembly, interacts with ctc. Interacts with the immature 50S ribosome subunit. 2 molecules of rbgA bind to one 50S subunit.

The protein localises to the cytoplasm. In terms of biological role, essential protein that is required for a late step of 50S ribosomal subunit assembly. Has GTPase activity that is stimulated by interaction with the immature 50S ribosome subunit. Binds to the 23S rRNA. Required for the association of ribosomal proteins rplP and rpmA with the large subunit. In Priestia megaterium (strain DSM 319 / IMG 1521) (Bacillus megaterium), this protein is Ribosome biogenesis GTPase A.